Consider the following 381-residue polypeptide: Glycerate kinase (381 aa).

This sequence belongs to the glycerate kinase type-1 family.

It carries out the reaction (R)-glycerate + ATP = (2R)-3-phosphoglycerate + ADP + H(+). The polypeptide is Glycerate kinase (glxK) (Bacillus cereus (strain ATCC 10987 / NRS 248)).